The chain runs to 282 residues: Succinate dehydrogenase [ubiquinone] iron-sulfur subunit, mitochondrial (282 aa).

The N-terminal 21 residues, 1–21 (MLRGSTSVCRSLELVTQAARY), are a transit peptide targeting the mitochondrion. One can recognise a 2Fe-2S ferredoxin-type domain in the interval 39–129 (EIYRFNPEEP…TTKIYPLPHM (91 aa)). Residues Cys89, Cys94, Cys97, and Cys109 each contribute to the [2Fe-2S] cluster site. The region spanning 172–202 (EQEKLDGLYECILCACCSASCPSYWWNADKY) is the 4Fe-4S ferredoxin-type domain. Positions 182, 185, and 188 each coordinate [4Fe-4S] cluster. Cys192 contacts [3Fe-4S] cluster. Trp197 lines the a rhodoquinol pocket. Trp197 lines the a ubiquinone pocket. Cys239 and Cys245 together coordinate [3Fe-4S] cluster. Cys249 is a [4Fe-4S] cluster binding site.

It belongs to the succinate dehydrogenase/fumarate reductase iron-sulfur protein family. Component of the mitochondrial electron transport chain complex II composed of four subunits: a flavoprotein (Fp), an iron-sulfur protein (Ip), and a large cytochrome b (CybL) subunit and a small cytochrome b (CybS) subunit. There are 2 developmental stage-specific forms of complex II which have the Ip and CybL subunits in common. Complex II from the free-living larvae (aerobic environment) acts as a succinate dehydrogenase and is composed of the common subunit Ip and CybL and the stage specific subunits FpL and CybSL. Complex II from parasitic larvae and adults (anaerobic environment) acts as a fumarate reductase and is composed of the common subunit Ip and CybL and the stage specific subunits FpA and CybSA. [2Fe-2S] cluster serves as cofactor. The cofactor is [3Fe-4S] cluster. [4Fe-4S] cluster is required as a cofactor. Expressed in adult muscles (at protein level).

It is found in the mitochondrion inner membrane. It catalyses the reaction a ubiquinone + succinate = a ubiquinol + fumarate. The catalysed reaction is a rhodoquinone + succinate = a rhodoquinol + fumarate. Its pathway is carbohydrate metabolism; tricarboxylic acid cycle; fumarate from succinate (eukaryal route): step 1/1. With respect to regulation, inhibited by the fungicide flutolanil. Its function is as follows. Iron-sulfur protein (Ip) subunit of the mitochondrial electron transport chain complex II which, together with the flavoprotein (Fp) subunit forms the catalytic core of the complex. During the free-living egg-larvae stages, which occur in an aerobic environment, complex II acts as a succinate dehydrogenase by transferring electrons from succinate to ubiquinone. During the parasitic larvae and adult stages, which occur in an anaerobic environment, complex II acts as a fumarate reductase by transferring electrons from rhodoquinol to fumarate. The protein is Succinate dehydrogenase [ubiquinone] iron-sulfur subunit, mitochondrial of Ascaris suum (Pig roundworm).